A 128-amino-acid polypeptide reads, in one-letter code: Arginine decarboxylase proenzyme (128 aa).

Residue S76 is the Schiff-base intermediate with substrate; via pyruvic acid of the active site. S76 is subject to Pyruvic acid (Ser); by autocatalysis. H81 functions as the Proton acceptor; for processing activity in the catalytic mechanism. C96 (proton donor; for catalytic activity) is an active-site residue.

The protein belongs to the prokaryotic AdoMetDC family. Type 1 subfamily. As to quaternary structure, heterooctamer of four alpha and four beta chains arranged as a tetramer of alpha/beta heterodimers. It depends on pyruvate as a cofactor. Is synthesized initially as an inactive proenzyme. Formation of the active enzyme involves a self-maturation process in which the active site pyruvoyl group is generated from an internal serine residue via an autocatalytic post-translational modification. Two non-identical subunits are generated from the proenzyme in this reaction, and the pyruvate is formed at the N-terminus of the alpha chain, which is derived from the carboxyl end of the proenzyme. The post-translation cleavage follows an unusual pathway, termed non-hydrolytic serinolysis, in which the side chain hydroxyl group of the serine supplies its oxygen atom to form the C-terminus of the beta chain, while the remainder of the serine residue undergoes an oxidative deamination to produce ammonia and the pyruvoyl group blocking the N-terminus of the alpha chain.

It catalyses the reaction L-arginine + H(+) = agmatine + CO2. It functions in the pathway amine and polyamine biosynthesis; agmatine biosynthesis; agmatine from L-arginine: step 1/1. Specifically catalyzes the decarboxylation of L-arginine to agmatine. Has no S-adenosylmethionine decarboxylase (AdoMetDC) activity. The polypeptide is Arginine decarboxylase proenzyme (Sulfurisphaera tokodaii (strain DSM 16993 / JCM 10545 / NBRC 100140 / 7) (Sulfolobus tokodaii)).